Consider the following 277-residue polypeptide: Hematopoietically-expressed homeobox protein HHEX (277 aa).

Disordered stretches follow at residues 47 to 69 (AAPA…NSSF) and 199 to 277 (WRRL…SATR). Residues 52 to 63 (HSLPAPPPPTLP) show a composition bias toward pro residues. The homeobox DNA-binding region spans 144 to 203 (RKGGQVRFSNEQTIELEKKFETQKYLSPPERKRLAKLLQLSERQVKTWFQNRRAKWRRLK). Residues 210-226 (TKKEEAEGTGDHGDPRS) are compositionally biased toward basic and acidic residues. A compositionally biased stretch (acidic residues) spans 250 to 266 (EDPESDVSDDSDQEVDI).

In terms of tissue distribution, in all hematopoietic tissues except peripheral blood erythrocytes and in the liver and lung.

The protein localises to the nucleus. Recognizes the DNA sequence 5'-ATTAA-3'. Transcriptional repressor. May play a role in hematopoietic differentiation. The polypeptide is Hematopoietically-expressed homeobox protein HHEX (HHEX) (Gallus gallus (Chicken)).